Here is a 511-residue protein sequence, read N- to C-terminus: MTMEINNTDPSENMPLPDDVDLSGSRAFDDSKLAKLNGIISQGLDPYPYRFEKNGDICEILVKFEDFEKNEGLSVRTAGRLYNIRKHGKMIFADLGDQTGRIQVLIRKGNLPDEEFATFKNLMDSGDIIGIQGELFRTKRGENSISVSEFSLLSKSLCALPEKFHGLKDVETRYRKRYLDLIVNAEKREIFVMRSKLISEIRRFLADREFLEFETPILQTVYGGANARPFKTFHNCLGQNLFLRIAPELYLKRLVVGGYEKVFEISKNFRNEDIDTTHNPEFTMIEVYEAYRDYNDMMDLTEALISELVFRLTGGYEVKMGENTINLRSPWKRISMEGALKEYAGLDVFSHSLEELKQIAIQNRIEDYEKAKSHGEFLALLFEGLVEDKLVNPTFIYDFPVENSPLAKNHREKEGFVERFELFLNGWELANGYSELNDPLEQEKRFEEQDKKRKLGDLEAQTVDYDFINALGYGLPPTGGMGLGIDRLTMILAGLESIKEVILFPQMKRED.

A compositionally biased stretch (polar residues) spans 1 to 11 (MTMEINNTDPS). The tract at residues 1–21 (MTMEINNTDPSENMPLPDDVD) is disordered. Mg(2+) contacts are provided by Glu-421 and Glu-428.

Belongs to the class-II aminoacyl-tRNA synthetase family. Homodimer. Mg(2+) is required as a cofactor.

The protein localises to the cytoplasm. It carries out the reaction tRNA(Lys) + L-lysine + ATP = L-lysyl-tRNA(Lys) + AMP + diphosphate. This Methanosarcina acetivorans (strain ATCC 35395 / DSM 2834 / JCM 12185 / C2A) protein is Lysine--tRNA ligase 2.